The primary structure comprises 932 residues: Protein translocase subunit SecA (932 aa).

ATP is bound by residues Gln87, 105 to 109 (GEGKT), and Asp515. The Zn(2+) site is built by Cys916, Cys918, Cys927, and His928.

Belongs to the SecA family. As to quaternary structure, monomer and homodimer. Part of the essential Sec protein translocation apparatus which comprises SecA, SecYEG and auxiliary proteins SecDF-YajC and YidC. The cofactor is Zn(2+).

It localises to the cell inner membrane. It is found in the cytoplasm. The enzyme catalyses ATP + H2O + cellular proteinSide 1 = ADP + phosphate + cellular proteinSide 2.. Its function is as follows. Part of the Sec protein translocase complex. Interacts with the SecYEG preprotein conducting channel. Has a central role in coupling the hydrolysis of ATP to the transfer of proteins into and across the cell membrane, serving both as a receptor for the preprotein-SecB complex and as an ATP-driven molecular motor driving the stepwise translocation of polypeptide chains across the membrane. The protein is Protein translocase subunit SecA of Burkholderia multivorans (strain ATCC 17616 / 249).